A 109-amino-acid chain; its full sequence is Large ribosomal subunit protein bL31B (109 aa).

Residues 79–109 form a disordered region; it reads NVRQPAQQPQPEEDALPAAKGKKKVVTKKKK. The span at 98 to 109 shows a compositional bias: basic residues; the sequence is KGKKKVVTKKKK.

Belongs to the bacterial ribosomal protein bL31 family. Type B subfamily. Part of the 50S ribosomal subunit.

The chain is Large ribosomal subunit protein bL31B from Chlamydia pneumoniae (Chlamydophila pneumoniae).